The primary structure comprises 545 residues: Membrane protein insertase YidC (545 aa).

The next 4 helical transmembrane spans lie at 350-370, 424-444, 461-481, and 498-518; these read IIGN…AVLY, LPML…FASV, ADPY…QTYL, and PLVF…YWVV.

It belongs to the OXA1/ALB3/YidC family. Type 1 subfamily. Interacts with the Sec translocase complex via SecD. Specifically interacts with transmembrane segments of nascent integral membrane proteins during membrane integration.

It localises to the cell inner membrane. In terms of biological role, required for the insertion and/or proper folding and/or complex formation of integral membrane proteins into the membrane. Involved in integration of membrane proteins that insert both dependently and independently of the Sec translocase complex, as well as at least some lipoproteins. Aids folding of multispanning membrane proteins. The protein is Membrane protein insertase YidC of Neisseria gonorrhoeae (strain NCCP11945).